Consider the following 293-residue polypeptide: Histamine N-methyltransferase (293 aa).

A substrate-binding site is contributed by E28. Residues G60, E89, Q94, S120, and I142 each coordinate S-adenosyl-L-methionine. N283 is a substrate binding site.

This sequence belongs to the class I-like SAM-binding methyltransferase superfamily. HNMT family. In terms of assembly, monomer.

The protein resides in the cytoplasm. It catalyses the reaction histamine + S-adenosyl-L-methionine = N(tau)-methylhistamine + S-adenosyl-L-homocysteine + H(+). Its function is as follows. Inactivates histamine by N-methylation. Plays an important role in degrading histamine and in regulating the airway response to histamine. The polypeptide is Histamine N-methyltransferase (hnmt) (Xenopus tropicalis (Western clawed frog)).